A 353-amino-acid polypeptide reads, in one-letter code: S-adenosylmethionine:tRNA ribosyltransferase-isomerase (353 aa).

The protein belongs to the QueA family. As to quaternary structure, monomer.

It is found in the cytoplasm. The catalysed reaction is 7-aminomethyl-7-carbaguanosine(34) in tRNA + S-adenosyl-L-methionine = epoxyqueuosine(34) in tRNA + adenine + L-methionine + 2 H(+). It functions in the pathway tRNA modification; tRNA-queuosine biosynthesis. Its function is as follows. Transfers and isomerizes the ribose moiety from AdoMet to the 7-aminomethyl group of 7-deazaguanine (preQ1-tRNA) to give epoxyqueuosine (oQ-tRNA). The polypeptide is S-adenosylmethionine:tRNA ribosyltransferase-isomerase (Baumannia cicadellinicola subsp. Homalodisca coagulata).